The following is a 435-amino-acid chain: Serine hydroxymethyltransferase (435 aa).

Residues Leu-133 and 137 to 139 (GHL) each bind (6S)-5,6,7,8-tetrahydrofolate. Lys-242 is modified (N6-(pyridoxal phosphate)lysine).

It belongs to the SHMT family. As to quaternary structure, homodimer. The cofactor is pyridoxal 5'-phosphate.

It is found in the cytoplasm. The catalysed reaction is (6R)-5,10-methylene-5,6,7,8-tetrahydrofolate + glycine + H2O = (6S)-5,6,7,8-tetrahydrofolate + L-serine. It functions in the pathway one-carbon metabolism; tetrahydrofolate interconversion. Its pathway is amino-acid biosynthesis; glycine biosynthesis; glycine from L-serine: step 1/1. Its function is as follows. Catalyzes the reversible interconversion of serine and glycine with tetrahydrofolate (THF) serving as the one-carbon carrier. This reaction serves as the major source of one-carbon groups required for the biosynthesis of purines, thymidylate, methionine, and other important biomolecules. Also exhibits THF-independent aldolase activity toward beta-hydroxyamino acids, producing glycine and aldehydes, via a retro-aldol mechanism. This Hyphomonas neptunium (strain ATCC 15444) protein is Serine hydroxymethyltransferase.